Consider the following 307-residue polypeptide: tRNA dimethylallyltransferase (307 aa).

Residue 9–16 coordinates ATP; it reads GPTAVGKT. 11 to 16 is a binding site for substrate; the sequence is TAVGKT. The tract at residues 34–37 is interaction with substrate tRNA; that stretch reads DSMQ.

This sequence belongs to the IPP transferase family. As to quaternary structure, monomer. Mg(2+) serves as cofactor.

It catalyses the reaction adenosine(37) in tRNA + dimethylallyl diphosphate = N(6)-dimethylallyladenosine(37) in tRNA + diphosphate. Catalyzes the transfer of a dimethylallyl group onto the adenine at position 37 in tRNAs that read codons beginning with uridine, leading to the formation of N6-(dimethylallyl)adenosine (i(6)A). The sequence is that of tRNA dimethylallyltransferase from Levilactobacillus brevis (strain ATCC 367 / BCRC 12310 / CIP 105137 / JCM 1170 / LMG 11437 / NCIMB 947 / NCTC 947) (Lactobacillus brevis).